Consider the following 74-residue polypeptide: Large ribosomal subunit protein bL31 (74 aa).

It belongs to the bacterial ribosomal protein bL31 family. Type A subfamily. Part of the 50S ribosomal subunit.

Its function is as follows. Binds the 23S rRNA. This Phenylobacterium zucineum (strain HLK1) protein is Large ribosomal subunit protein bL31.